A 251-amino-acid chain; its full sequence is Sugar fermentation stimulation protein homolog (251 aa).

This sequence belongs to the SfsA family.

In Prochlorococcus marinus (strain SARG / CCMP1375 / SS120), this protein is Sugar fermentation stimulation protein homolog.